The chain runs to 806 residues: Mitogen-activated protein kinase 7 (806 aa).

Residues 1 to 23 (MAEPLKEEDGEDGSGEPPGRVKA) are disordered. A2 bears the N-acetylalanine mark. A required for cytoplasmic targeting region spans residues 2–77 (AEPLKEEDGE…VVSSARRRLT (76 aa)). The 293-residue stretch at 55–347 (YEIIETIGNG…AAAALRHPFL (293 aa)) folds into the Protein kinase domain. Residues 61 to 69 (IGNGAYGVV) and K84 each bind ATP. The required for binding to MAP2K5 stretch occupies residues 78-139 (GQQVAIKKIP…FRSVYVVLDL (62 aa)). The segment at 140–406 (MESDLHQIIH…QQIRFQPSLQ (267 aa)) is necessary for oligomerization. D182 acts as the Proton acceptor in catalysis. The TXY motif lies at 219-221 (TEY). A may not be required for kinase activity; required to stimulate MEF2C activity region spans residues 407–806 (PVASEPVCPD…LSDLPDLQEP (400 aa)). Disordered stretches follow at residues 424–473 (APSG…AISD) and 488–727 (RSRL…PKGS). The segment covering 433–443 (SPPPALPPCSD) has biased composition (pro residues). Composition is skewed to basic and acidic residues over residues 502–519 (PEPR…EREE), 527–544 (RAKE…KERG), and 563–573 (DNDRSLLERWT). Residues 505–539 (RKPVTAQERQREREEKRRRRQERAKEREKRRQERE) carry the Nuclear localization signal motif. A compositionally biased stretch (pro residues) spans 578–592 (PPAPAPAPAPAPAPA). The segment covering 593–603 (PSSAQPTSTPT) has biased composition (low complexity). Residues 627–643 (VCPPPGPVPQPAGPIPA) show a composition bias toward pro residues. Residues 647–660 (TAPSTSLLASQSLV) show a composition bias toward polar residues. The segment covering 678–689 (PSGPPPPDPGLT) has biased composition (pro residues). Positions 693–710 (STSESPDVNLVTQQLSKS) are enriched in polar residues. S710 is subject to Phosphoserine. T723 carries the post-translational modification Phosphothreonine.

Belongs to the protein kinase superfamily. CMGC Ser/Thr protein kinase family. MAP kinase subfamily. In terms of assembly, interacts with MAP2K5. Forms oligomers. Interacts with MEF2A, MEF2C and MEF2D; the interaction phosphorylates the MEF2s and enhances transcriptional activity of MEF2A, MEF2C but not MEF2D. Interacts with SGK1. Interacts with PML. Interacts (via N-terminal half) with HSP90AB1-CDC37 chaperone complex in resting cells; the interaction is MAP2K5-independent and prevents MAPK7 from ubiquitination and proteasomal degradation. Interacts with STUB1/CHIP; the interaction is enhanced in the presence of IGF1 or MAP2K5 and promotes STUB1/CHIP E3 ligase activity. It depends on Mg(2+) as a cofactor. Dually phosphorylated on Thr-219 and Tyr-221, which activates the enzyme. In terms of tissue distribution, detected in testis, brain, kidney, lung and heart. Detected in total embryo (at protein level).

The protein resides in the cytoplasm. It localises to the nucleus. The protein localises to the PML body. It carries out the reaction L-seryl-[protein] + ATP = O-phospho-L-seryl-[protein] + ADP + H(+). The enzyme catalyses L-threonyl-[protein] + ATP = O-phospho-L-threonyl-[protein] + ADP + H(+). Its activity is regulated as follows. Activated by tyrosine and threonine phosphorylation. Activated in response to hyperosmolarity, hydrogen peroxide, and epidermal growth factor (EGF). Functionally, plays a role in various cellular processes such as proliferation, differentiation and cell survival. The upstream activator of MAPK7 is the MAPK kinase MAP2K5. Upon activation, it translocates to the nucleus and phosphorylates various downstream targets including MEF2C. EGF activates MAPK7 through a Ras-independent and MAP2K5-dependent pathway. As part of the MAPK/ERK signaling pathway, acts as a negative regulator of apoptosis in cardiomyocytes via interaction with STUB1/CHIP and promotion of STUB1-mediated ubiquitination and degradation of ICER-type isoforms of CREM. May have a role in muscle cell differentiation. May be important for endothelial function and maintenance of blood vessel integrity. MAP2K5 and MAPK7 interact specifically with one another and not with MEK1/ERK1 or MEK2/ERK2 pathways. Phosphorylates SGK1 at Ser-78 and this is required for growth factor-induced cell cycle progression. Involved in the regulation of p53/TP53 by disrupting the PML-MDM2 interaction. This chain is Mitogen-activated protein kinase 7 (Mapk7), found in Mus musculus (Mouse).